The following is a 306-amino-acid chain: Curved DNA-binding protein (306 aa).

The J domain maps to 5-69 (DYYAIMGVKP…QRRAEYDQLW (65 aa)).

The protein resides in the cytoplasm. The protein localises to the nucleoid. Its function is as follows. DNA-binding protein that preferentially recognizes a curved DNA sequence. It is probably a functional analog of DnaJ; displays overlapping activities with DnaJ, but functions under different conditions, probably acting as a molecular chaperone in an adaptive response to environmental stresses other than heat shock. Lacks autonomous chaperone activity; binds native substrates and targets them for recognition by DnaK. Its activity is inhibited by the binding of CbpM. In Salmonella choleraesuis (strain SC-B67), this protein is Curved DNA-binding protein.